The sequence spans 597 residues: FERM domain-containing protein 3 (597 aa).

Residues 32–312 (MRCTIRLLDD…ENQAFYKYAK (281 aa)) enclose the FERM domain. Residues 383 to 403 (LLPSPSEQEEELPLGEGVPLP) are disordered. A helical membrane pass occupies residues 531–551 (LLVVGLGLLLFVFPLLLLLLE).

As to expression, ovary-specific.

It localises to the membrane. In terms of biological role, putative tumor suppressor gene that may be implicated in the origin and progression of lung cancer. The protein is FERM domain-containing protein 3 (FRMD3) of Homo sapiens (Human).